The primary structure comprises 210 residues: N-(5'-phosphoribosyl)anthranilate isomerase (210 aa).

The protein belongs to the TrpF family.

It catalyses the reaction N-(5-phospho-beta-D-ribosyl)anthranilate = 1-(2-carboxyphenylamino)-1-deoxy-D-ribulose 5-phosphate. It functions in the pathway amino-acid biosynthesis; L-tryptophan biosynthesis; L-tryptophan from chorismate: step 3/5. This is N-(5'-phosphoribosyl)anthranilate isomerase from Methanococcus aeolicus (strain ATCC BAA-1280 / DSM 17508 / OCM 812 / Nankai-3).